We begin with the raw amino-acid sequence, 352 residues long: Protein NDRG4 (352 aa).

Serine 298, serine 317, and serine 323 each carry phosphoserine. The segment at 301–352 (AVPSASMTRLARSRTASLTSASSVDGSRPQPCTHSDSSEGMGQVNHTMEVSC) is disordered. Residues 308-323 (TRLARSRTASLTSASS) show a composition bias toward low complexity. Residues 330–352 (QPCTHSDSSEGMGQVNHTMEVSC) are compositionally biased toward polar residues.

It belongs to the NDRG family. In terms of tissue distribution, expressed in the brain and heart, weakly in the kidney; most prominently in postnatal brain where it is expressed widely in the olfactory bulb, cerebral cortex, hippocampus, cerebellum, thalamus, and medulla oblongata.

The protein localises to the cytoplasm. The protein resides in the cytosol. Functionally, contributes to the maintenance of intracerebral BDNF levels within the normal range, which is necessary for the preservation of spatial learning and the resistance to neuronal cell death caused by ischemic stress. May enhance growth factor-induced ERK1 and ERK2 phosphorylation, including that induced by NGF. May attenuate NGF-promoted ELK1 phosphorylation in a microtubule-dependent manner. This chain is Protein NDRG4 (Ndrg4), found in Rattus norvegicus (Rat).